The primary structure comprises 160 residues: PTDAQTDARSFLSEEMIAEFKAAFDMFDTDGGGDISTKELGTVMRMLGQNPTREELDAIIEEVDEDGSGTIDFEEFLVMMVRQLKEDQAGKSEEELAEFFRVFDKNGDGFIDREEFGEILRSSGEPVSEEEIDELMADGDKNNDGKIDFDEWLKMMENIQ.

EF-hand domains follow at residues 15–50, 51–86, 91–126, and 127–160; these read EMIAEFKAAFDMFDTDGGGDISTKELGTVMRMLGQN, PTREELDAIIEEVDEDGSGTIDFEEFLVMMVRQLKE, KSEEELAEFFRVFDKNGDGFIDREEFGEILRSSGEP, and VSEEEIDELMADGDKNNDGKIDFDEWLKMMENIQ. Positions 28, 30, 34, 39, 64, 66, 68, 70, 75, 104, 106, 108, 115, 140, 142, 144, 146, and 151 each coordinate Ca(2+).

This sequence belongs to the troponin C family.

In terms of biological role, troponin is the central regulatory protein of striated muscle contraction. Tn consists of three components: Tn-I which is the inhibitor of actomyosin ATPase, Tn-T which contains the binding EF-hand for tropomyosin and Tn-C. The binding of calcium to Tn-C abolishes the inhibitory action of Tn on actin filaments. The sequence is that of Troponin C, skeletal muscle from Anguilla anguilla (European freshwater eel).